A 180-amino-acid polypeptide reads, in one-letter code: Regulator of G-protein signaling 8 (180 aa).

At Ser26 the chain carries Phosphoserine. The 116-residue stretch at 56-171 (SFDVLLSHKY…FLRSKMYLDL (116 aa)) folds into the RGS domain.

Interacts with GNAO1. Interacts with GNAI3.

Its subcellular location is the cell membrane. The protein localises to the membrane. The protein resides in the perikaryon. It localises to the cell projection. It is found in the dendrite. Its subcellular location is the nucleus. Functionally, regulates G protein-coupled receptor signaling cascades, including signaling via muscarinic acetylcholine receptor CHRM2 and dopamine receptor DRD2. Inhibits signal transduction by increasing the GTPase activity of G protein alpha subunits, thereby driving them into their inactive GDP-bound form. Modulates the activity of potassium channels that are activated in response to DRD2 and CHRM2 signaling. The chain is Regulator of G-protein signaling 8 (RGS8) from Homo sapiens (Human).